The primary structure comprises 689 residues: UvrABC system protein C (689 aa).

Positions 1 to 19 (MTSDSSDTAKQIGSGQPSG) are enriched in polar residues. Positions 1-59 (MTSDSSDTAKQIGSGQPSGSPADMRRRDGVAPEQEVDPASLETDEDDEARLPDLPDEPV) are disordered. Positions 42–59 (ETDEDDEARLPDLPDEPV) are enriched in acidic residues. One can recognise a GIY-YIG domain in the interval 83–161 (TSPGVYRMMN…IKQLRPRFNV (79 aa)). Residues 271-306 (RAVKEDLARAMEQAAADLAFERAALYRDRLAALSAI) enclose the UVR domain.

It belongs to the UvrC family. Interacts with UvrB in an incision complex.

Its subcellular location is the cytoplasm. Functionally, the UvrABC repair system catalyzes the recognition and processing of DNA lesions. UvrC both incises the 5' and 3' sides of the lesion. The N-terminal half is responsible for the 3' incision and the C-terminal half is responsible for the 5' incision. The chain is UvrABC system protein C from Nitrobacter winogradskyi (strain ATCC 25391 / DSM 10237 / CIP 104748 / NCIMB 11846 / Nb-255).